Reading from the N-terminus, the 553-residue chain is Replication factor C large subunit (553 aa).

50–57 contacts ATP; sequence GGPGVGKT. A disordered region spans residues 438–553; the sequence is GKRPGKPEAG…SKKQRTLFDF (116 aa). Over residues 442–451 the composition is skewed to basic and acidic residues; sequence GKPEAGEPRE. Over residues 503 to 513 the composition is skewed to low complexity; it reads EAPMAAAMPAA. Basic and acidic residues predominate over residues 532-553; that stretch reads EPEKPPAAEDKCSKKQRTLFDF.

This sequence belongs to the activator 1 small subunits family. RfcL subfamily. As to quaternary structure, heteromultimer composed of small subunits (RfcS) and large subunits (RfcL).

Its function is as follows. Part of the RFC clamp loader complex which loads the PCNA sliding clamp onto DNA. In Methanocella arvoryzae (strain DSM 22066 / NBRC 105507 / MRE50), this protein is Replication factor C large subunit.